Consider the following 447-residue polypeptide: Argininosuccinate synthase (447 aa).

ATP-binding positions include 17–25 and Ala43; that span reads AFSGGLDTS. Tyr99 is an L-citrulline binding site. ATP is bound by residues Gly129 and Thr131. L-aspartate-binding residues include Thr131, Asn135, and Asp136. Asn135 is a binding site for L-citrulline. Asp136 serves as a coordination point for ATP. L-citrulline contacts are provided by Arg139 and Ser192. Asp194 lines the ATP pocket. L-citrulline is bound by residues Thr201, Glu203, and Glu280.

This sequence belongs to the argininosuccinate synthase family. Type 2 subfamily. As to quaternary structure, homotetramer.

Its subcellular location is the cytoplasm. It catalyses the reaction L-citrulline + L-aspartate + ATP = 2-(N(omega)-L-arginino)succinate + AMP + diphosphate + H(+). Its pathway is amino-acid biosynthesis; L-arginine biosynthesis; L-arginine from L-ornithine and carbamoyl phosphate: step 2/3. This chain is Argininosuccinate synthase, found in Salmonella newport (strain SL254).